A 332-amino-acid polypeptide reads, in one-letter code: MERHTTLGEFIIENQKDFPYAKGELSALLSSIRLAGKVVNQQINKAGLAEILGKAGKENVQGESQAKLDVLANEIFVSTLRNRGEICGLASEELEDYLVFDEEMHKNAEYIVLIDPLDGSSNIDVDITVGTIFSIYRRISKKGTPATLEDFLQPGINQVAAGYLIYGTSTILVYTTGNGVNGFTFDPGIGSFFLSHSDIKFPKKGNTYSVNEGNYVHFPQGIKKYIKWVQELNEEENRPFTSRYTGSLVADFHRNMLLGGIYLYPQGTTAPKGKLRLLYECNPMAFLAEQAGGKATDGSRRIMELQPQELHERAPFICGNKEMVEKAEEFMQ.

Mg(2+)-binding residues include glutamate 92, aspartate 115, leucine 117, and aspartate 118. Substrate contacts are provided by residues 118–121 (DGSS), asparagine 211, tyrosine 244, 262–264 (YLY), and lysine 274. A Mg(2+)-binding site is contributed by glutamate 280.

It belongs to the FBPase class 1 family. In terms of assembly, homotetramer. Requires Mg(2+) as cofactor.

It is found in the cytoplasm. It carries out the reaction beta-D-fructose 1,6-bisphosphate + H2O = beta-D-fructose 6-phosphate + phosphate. It functions in the pathway carbohydrate biosynthesis; gluconeogenesis. The sequence is that of Fructose-1,6-bisphosphatase class 1 1 from Christiangramia forsetii (strain DSM 17595 / CGMCC 1.15422 / KT0803) (Gramella forsetii).